Consider the following 479-residue polypeptide: MIIFEKSVPGRKAYRLPDEELQRIDPVFPEHLKRTRPLRLPELSEPDVVRHYTALAEKNYSVDKGFYPLGSCTMKYNPKLNEYVAGLEGFTDIHPYQPWESVQGALQVMYELKEFLCEITGMDEMTLQPAAGAHGELTGMLIVRAYHLSRNDKKRHVALVPDSAHGTNPASAAMAGFDVVEIKSTEDGLVDLEQLENHLNDEIAVLMLTNPNTLGLFEKDIVKIAEKVHQAGALLYYDGANLNAIMGKIKPGEMGFDIVHLNLHKTFSAPHGMGGPGSGPVGVKAFLSEFLPIPIIRKDGDKYYPDFKLPNSIGRTRSFYGNFLVLLKAYVYILSMGKDGLTRASEMAVLNANYLRSLISKFLKIASPGICMHEFVVDGSQFVKETGVKILDVAKRILDYGLHAPTVYFPLIVHEDMMIEPTETENKNTLDYFAKVLEKIVEEAKKTPEVVKTAPHTTPVKRLDDITATKKPVYRYRLS.

Lysine 265 carries the post-translational modification N6-(pyridoxal phosphate)lysine.

The protein belongs to the GcvP family. C-terminal subunit subfamily. In terms of assembly, the glycine cleavage system is composed of four proteins: P, T, L and H. In this organism, the P 'protein' is a heterodimer of two subunits. It depends on pyridoxal 5'-phosphate as a cofactor.

The enzyme catalyses N(6)-[(R)-lipoyl]-L-lysyl-[glycine-cleavage complex H protein] + glycine + H(+) = N(6)-[(R)-S(8)-aminomethyldihydrolipoyl]-L-lysyl-[glycine-cleavage complex H protein] + CO2. The glycine cleavage system catalyzes the degradation of glycine. The P protein binds the alpha-amino group of glycine through its pyridoxal phosphate cofactor; CO(2) is released and the remaining methylamine moiety is then transferred to the lipoamide cofactor of the H protein. In Pseudothermotoga lettingae (strain ATCC BAA-301 / DSM 14385 / NBRC 107922 / TMO) (Thermotoga lettingae), this protein is Probable glycine dehydrogenase (decarboxylating) subunit 2.